The sequence spans 61 residues: Large ribosomal subunit protein bL32 (61 aa).

Positions 1–44 (MAVQQNRKSRSRRDMRRSHDALTENALTVDQATGETHRRHHVTK) are disordered. A compositionally biased stretch (basic residues) spans 7 to 16 (RKSRSRRDMR). The segment covering 25 to 34 (NALTVDQATG) has biased composition (polar residues).

The protein belongs to the bacterial ribosomal protein bL32 family.

The polypeptide is Large ribosomal subunit protein bL32 (Acinetobacter baumannii (strain AB307-0294)).